Reading from the N-terminus, the 496-residue chain is Aspartyl/glutamyl-tRNA(Asn/Gln) amidotransferase subunit B (496 aa).

The protein belongs to the GatB/GatE family. GatB subfamily. Heterotrimer of A, B and C subunits.

The enzyme catalyses L-glutamyl-tRNA(Gln) + L-glutamine + ATP + H2O = L-glutaminyl-tRNA(Gln) + L-glutamate + ADP + phosphate + H(+). It catalyses the reaction L-aspartyl-tRNA(Asn) + L-glutamine + ATP + H2O = L-asparaginyl-tRNA(Asn) + L-glutamate + ADP + phosphate + 2 H(+). In terms of biological role, allows the formation of correctly charged Asn-tRNA(Asn) or Gln-tRNA(Gln) through the transamidation of misacylated Asp-tRNA(Asn) or Glu-tRNA(Gln) in organisms which lack either or both of asparaginyl-tRNA or glutaminyl-tRNA synthetases. The reaction takes place in the presence of glutamine and ATP through an activated phospho-Asp-tRNA(Asn) or phospho-Glu-tRNA(Gln). The protein is Aspartyl/glutamyl-tRNA(Asn/Gln) amidotransferase subunit B of Picosynechococcus sp. (strain ATCC 27264 / PCC 7002 / PR-6) (Agmenellum quadruplicatum).